A 524-amino-acid chain; its full sequence is tRNA-2-methylthio-N(6)-dimethylallyladenosine synthase (524 aa).

The segment covering 1 to 12 (MNTHPSHPDHPA) has biased composition (basic and acidic residues). Residues 1 to 23 (MNTHPSHPDHPADTLPARGNREG) are disordered. The region spanning 27-143 (RTYEVRTFGC…LPTLLNRAEH (117 aa)) is the MTTase N-terminal domain. Residues Cys-36, Cys-72, Cys-106, Cys-180, Cys-184, and Cys-187 each contribute to the [4Fe-4S] cluster site. Residues 166-402 (RESAYAGWVS…MALQERICEE (237 aa)) enclose the Radical SAM core domain. Residues 405 to 476 (QKFIGQTVEL…PFFLIADAGV (72 aa)) form the TRAM domain.

The protein belongs to the methylthiotransferase family. MiaB subfamily. In terms of assembly, monomer. [4Fe-4S] cluster serves as cofactor.

The protein resides in the cytoplasm. The enzyme catalyses N(6)-dimethylallyladenosine(37) in tRNA + (sulfur carrier)-SH + AH2 + 2 S-adenosyl-L-methionine = 2-methylsulfanyl-N(6)-dimethylallyladenosine(37) in tRNA + (sulfur carrier)-H + 5'-deoxyadenosine + L-methionine + A + S-adenosyl-L-homocysteine + 2 H(+). Its function is as follows. Catalyzes the methylthiolation of N6-(dimethylallyl)adenosine (i(6)A), leading to the formation of 2-methylthio-N6-(dimethylallyl)adenosine (ms(2)i(6)A) at position 37 in tRNAs that read codons beginning with uridine. The sequence is that of tRNA-2-methylthio-N(6)-dimethylallyladenosine synthase from Corynebacterium efficiens (strain DSM 44549 / YS-314 / AJ 12310 / JCM 11189 / NBRC 100395).